A 239-amino-acid polypeptide reads, in one-letter code: Ribonuclease 3 (239 aa).

The RNase III domain maps to 11–133 (HAAIQKKLGY…MFAAVSFDAD (123 aa)). Glu-46 lines the Mg(2+) pocket. The active site involves Asp-50. Asp-119 and Glu-122 together coordinate Mg(2+). The active site involves Glu-122. In terms of domain architecture, DRBM spans 160-230 (DGKTALQEAL…AKEALKWLEE (71 aa)).

It belongs to the ribonuclease III family. Homodimer. Requires Mg(2+) as cofactor.

The protein resides in the cytoplasm. It carries out the reaction Endonucleolytic cleavage to 5'-phosphomonoester.. Its function is as follows. Digests double-stranded RNA. Involved in the processing of primary rRNA transcript to yield the immediate precursors to the large and small rRNAs (23S and 16S). Also processes some mRNAs, and tRNAs when they are encoded in the rRNA operon. CRISPR (clustered regularly interspaced short palindromic repeat) is an adaptive immune system that provides protection against mobile genetic elements (viruses, transposable elements and conjugative plasmids). CRISPR clusters contain spacers, sequences complementary to antecedent mobile elements, and target invading nucleic acids. CRISPR clusters are transcribed and processed into CRISPR RNA (crRNA). In this organism endogenous ribonuclease 3 and Cas9 are required for correct coprocessing of pre-crRNA and the trans-encoded small RNA (tracrRNA). Cas9, crRNA and tracrRNA are required for cleavage of invading DNA. Complements pre-crRNA and tracrRNA coprocessing defects in an rnc deletion in S.pyogenes strain 370. In Neisseria meningitidis serogroup A / serotype 4A (strain DSM 15465 / Z2491), this protein is Ribonuclease 3.